The following is a 417-amino-acid chain: UDP-N-acetylglucosamine 1-carboxyvinyltransferase 2 (417 aa).

22 to 23 (KN) provides a ligand contact to phosphoenolpyruvate. UDP-N-acetyl-alpha-D-glucosamine is bound at residue R94. The active-site Proton donor is C118. C118 is modified (2-(S-cysteinyl)pyruvic acid O-phosphothioketal). UDP-N-acetyl-alpha-D-glucosamine is bound by residues 123–127 (RPIDL), D306, and I328.

This sequence belongs to the EPSP synthase family. MurA subfamily.

It localises to the cytoplasm. It catalyses the reaction phosphoenolpyruvate + UDP-N-acetyl-alpha-D-glucosamine = UDP-N-acetyl-3-O-(1-carboxyvinyl)-alpha-D-glucosamine + phosphate. It functions in the pathway cell wall biogenesis; peptidoglycan biosynthesis. Cell wall formation. Adds enolpyruvyl to UDP-N-acetylglucosamine. This Clostridium tetani (strain Massachusetts / E88) protein is UDP-N-acetylglucosamine 1-carboxyvinyltransferase 2.